The chain runs to 301 residues: Rhodopsin (301 aa).

Topologically, residues 1 to 18 are extracellular; the sequence is LHMIHLHWYQYPPMNPIM. A helical transmembrane segment spans residues 19–43; sequence YPLLLVFMLITGILCLAGNFVTIWV. The Cytoplasmic segment spans residues 44–55; sequence FMNTKSLRTPAN. The chain crosses the membrane as a helical span at residues 56 to 78; sequence LLVVNLAMSDFLMMFTMFPPMMI. At 79–92 the chain is on the extracellular side; sequence TCYYHTWTLGATFC. Cys-92 and Cys-169 are joined by a disulfide. Residues 93–115 traverse the membrane as a helical segment; the sequence is QVYAFLGNLCGCASIWTMVFITF. The short motif at 116–118 is the 'Ionic lock' involved in activated form stabilization element; it reads DRY. Residues 116 to 134 are Cytoplasmic-facing; sequence DRYNVIVKGVAGEPLSTKK. A helical membrane pass occupies residues 135–155; it reads ATLWILTIWILSTTWCVAPFF. Residues 156 to 182 lie on the Extracellular side of the membrane; sequence GWNRYVPEGNLTGCGTDYLSQDILSRS. A glycan (N-linked (GlcNAc...) asparagine) is linked at Asn-165. The chain crosses the membrane as a helical span at residues 183-204; it reads YLYIYSTWVYFLPLAITIYCYV. The Cytoplasmic portion of the chain corresponds to 205–245; that stretch reads VIIKAVAAHEKGMRDQAKKMGIKSLRNEEAQKTSAECRLAK. Residues 246-267 form a helical membrane-spanning segment; sequence IAMTTVALWFIAWTPYLLINWV. Topologically, residues 268-278 are extracellular; it reads GMFARSYLSPV. Residues 279–300 form a helical membrane-spanning segment; it reads YTIWGYVFAKANAVYNPIVYAI. Lys-288 is subject to N6-(retinylidene)lysine.

It belongs to the G-protein coupled receptor 1 family. Opsin subfamily. As to quaternary structure, homodimer. Interacts with GNAQ. Post-translationally, contains one covalently linked retinal chromophore.

It localises to the cell projection. It is found in the rhabdomere membrane. Photoreceptor required for image-forming vision at low light intensity. Can use both retinal and 3-dehydroretinal as visual pigment. Light-induced isomerization of 11-cis to all-trans retinal triggers a conformational change that activates signaling via G-proteins. Signaling via GNAQ probably mediates the activation of phospholipase C. This chain is Rhodopsin (RHO), found in Orconectes australis (Southern cave crayfish).